The following is a 502-amino-acid chain: Glycerol kinase (502 aa).

Threonine 14 contributes to the ADP binding site. Residues threonine 14, threonine 15, and serine 16 each coordinate ATP. Threonine 14 is a sn-glycerol 3-phosphate binding site. Arginine 18 is a binding site for ADP. 4 residues coordinate sn-glycerol 3-phosphate: arginine 84, glutamate 85, tyrosine 137, and aspartate 247. Glycerol contacts are provided by arginine 84, glutamate 85, tyrosine 137, aspartate 247, and glutamine 248. Residues threonine 269 and glycine 312 each contribute to the ADP site. Residues threonine 269, glycine 312, glutamine 316, and glycine 413 each contribute to the ATP site. Residues glycine 413 and asparagine 417 each coordinate ADP.

It belongs to the FGGY kinase family. In terms of assembly, homotetramer and homodimer (in equilibrium). Heterodimer with EIIA-Glc. Binds 1 zinc ion per glycerol kinase EIIA-Glc dimer. The zinc ion is important for dimerization.

The catalysed reaction is glycerol + ATP = sn-glycerol 3-phosphate + ADP + H(+). It participates in polyol metabolism; glycerol degradation via glycerol kinase pathway; sn-glycerol 3-phosphate from glycerol: step 1/1. With respect to regulation, activity of this regulatory enzyme is affected by several metabolites. Allosterically and non-competitively inhibited by fructose 1,6-bisphosphate (FBP) and unphosphorylated phosphocarrier protein EIIA-Glc (III-Glc), an integral component of the bacterial phosphotransferase (PTS) system. Functionally, key enzyme in the regulation of glycerol uptake and metabolism. Catalyzes the phosphorylation of glycerol to yield sn-glycerol 3-phosphate. The sequence is that of Glycerol kinase from Photorhabdus laumondii subsp. laumondii (strain DSM 15139 / CIP 105565 / TT01) (Photorhabdus luminescens subsp. laumondii).